We begin with the raw amino-acid sequence, 269 residues long: MELLIKAFIMGIVEGLTEFLPISSTGHLIIVGKFIHFTGNFATMFEIVIQLGAILAVVFHYRKKIFASLKNLKPGSWGFNLWFKIFIAFIPAAVIGLLTHKYIEEHLFSPFTVAIALIAGAIMMIVIEDTFGKRYKIDNMDKVDTKKSLLIGIAQVMSLFPGMSRSASTIMGGMLAGLSVKAAAEFSFFLAIPTMFAATTLSLLKGFSAMSLLEWQALAVGFITSFLTALFVVDKFLSYLTRHSLKPFAYYRLAVGVLMILLVAEKIVK.

7 consecutive transmembrane segments (helical) span residues 41–61 (FATMFEIVIQLGAILAVVFHY), 78–98 (GFNLWFKIFIAFIPAAVIGLL), 107–127 (LFSPFTVAIALIAGAIMMIVI), 148–167 (SLLIGIAQVMSLFPGMSRSA), 184–204 (AEFSFFLAIPTMFAATTLSLL), 213–233 (LEWQALAVGFITSFLTALFVV), and 248–268 (FAYYRLAVGVLMILLVAEKIV).

It belongs to the UppP family.

The protein localises to the cell membrane. The catalysed reaction is di-trans,octa-cis-undecaprenyl diphosphate + H2O = di-trans,octa-cis-undecaprenyl phosphate + phosphate + H(+). Functionally, catalyzes the dephosphorylation of undecaprenyl diphosphate (UPP). Confers resistance to bacitracin. This is Undecaprenyl-diphosphatase from Thermoanaerobacter pseudethanolicus (strain ATCC 33223 / 39E) (Clostridium thermohydrosulfuricum).